A 348-amino-acid polypeptide reads, in one-letter code: GTPase Obg (348 aa).

An Obg domain is found at 1 to 160 (MHFLDQAKIF…MWVWLRLKLL (160 aa)). The segment at 120–145 (RGGDGGRGNASYKTSTNRAPRQHGPG) is disordered. Residues 161-328 (ADAGLVGLPN…VLDKLLEAIG (168 aa)) enclose the OBG-type G domain. Residues 167–174 (GLPNAGKS), 192–196 (FTTLR), 213–216 (DIPG), 280–283 (NKID), and 309–311 (SGA) contribute to the GTP site. Positions 174 and 194 each coordinate Mg(2+). The interval 326 to 348 (AIGQPEPGPDADEEEKGGDWSPI) is disordered.

Belongs to the TRAFAC class OBG-HflX-like GTPase superfamily. OBG GTPase family. Monomer. It depends on Mg(2+) as a cofactor.

It is found in the cytoplasm. In terms of biological role, an essential GTPase which binds GTP, GDP and possibly (p)ppGpp with moderate affinity, with high nucleotide exchange rates and a fairly low GTP hydrolysis rate. Plays a role in control of the cell cycle, stress response, ribosome biogenesis and in those bacteria that undergo differentiation, in morphogenesis control. The polypeptide is GTPase Obg (Sphingopyxis alaskensis (strain DSM 13593 / LMG 18877 / RB2256) (Sphingomonas alaskensis)).